Consider the following 286-residue polypeptide: 4-hydroxybenzoate octaprenyltransferase (286 aa).

Helical transmembrane passes span isoleucine 22–methionine 42, leucine 45–isoleucine 65, leucine 98–isoleucine 118, phenylalanine 143–alanine 163, isoleucine 213–glutamine 233, tyrosine 238–leucine 255, and asparagine 266–isoleucine 286.

The protein belongs to the UbiA prenyltransferase family. It depends on Mg(2+) as a cofactor.

It localises to the cell inner membrane. The enzyme catalyses all-trans-octaprenyl diphosphate + 4-hydroxybenzoate = 4-hydroxy-3-(all-trans-octaprenyl)benzoate + diphosphate. It participates in cofactor biosynthesis; ubiquinone biosynthesis. Catalyzes the prenylation of para-hydroxybenzoate (PHB) with an all-trans polyprenyl group. Mediates the second step in the final reaction sequence of ubiquinone-8 (UQ-8) biosynthesis, which is the condensation of the polyisoprenoid side chain with PHB, generating the first membrane-bound Q intermediate 3-octaprenyl-4-hydroxybenzoate. The chain is 4-hydroxybenzoate octaprenyltransferase from Histophilus somni (strain 129Pt) (Haemophilus somnus).